Consider the following 202-residue polypeptide: Putative 3-methyladenine DNA glycosylase (202 aa).

This sequence belongs to the DNA glycosylase MPG family.

This Staphylococcus aureus (strain bovine RF122 / ET3-1) protein is Putative 3-methyladenine DNA glycosylase.